Consider the following 303-residue polypeptide: Ribonuclease P protein subunit p40 (303 aa).

In terms of assembly, component of nuclear RNase P and RNase MRP ribonucleoproteins. RNase P consists of a catalytic RNA moiety and about 10 protein subunits; POP1, POP4, POP5, POP7, RPP14, RPP21, RPP25, RPP30, RPP38 and RPP40. Within the RNase P complex, POP1, POP7 and RPP25 form the 'finger' subcomplex, POP5, RPP14, RPP40 and homodimeric RPP30 form the 'palm' subcomplex, and RPP21, POP4 and RPP38 form the 'wrist' subcomplex. All subunits of the RNase P complex interact with the catalytic RNA. Several subunits of RNase P are also part of the RNase MRP complex. RNase MRP consists of a catalytic RNA moiety and about 8 protein subunits; POP1, POP7, RPP25, RPP30, RPP38, RPP40 and possibly also POP4 and POP5.

The protein localises to the nucleus. It is found in the nucleolus. Component of ribonuclease P, a ribonucleoprotein complex that generates mature tRNA molecules by cleaving their 5'-ends. Also a component of the MRP ribonuclease complex, which cleaves pre-rRNA sequences. The sequence is that of Ribonuclease P protein subunit p40 (RPP40) from Bos taurus (Bovine).